Reading from the N-terminus, the 168-residue chain is Transcription antitermination protein NusB (168 aa).

This sequence belongs to the NusB family.

Its function is as follows. Involved in transcription antitermination. Required for transcription of ribosomal RNA (rRNA) genes. Binds specifically to the boxA antiterminator sequence of the ribosomal RNA (rrn) operons. This Chlamydia trachomatis serovar D (strain ATCC VR-885 / DSM 19411 / UW-3/Cx) protein is Transcription antitermination protein NusB.